Here is a 134-residue protein sequence, read N- to C-terminus: ATP synthase epsilon chain (134 aa).

The protein belongs to the ATPase epsilon chain family. As to quaternary structure, F-type ATPases have 2 components, CF(1) - the catalytic core - and CF(0) - the membrane proton channel. CF(1) has five subunits: alpha(3), beta(3), gamma(1), delta(1), epsilon(1). CF(0) has three main subunits: a, b and c.

The protein resides in the cell inner membrane. In terms of biological role, produces ATP from ADP in the presence of a proton gradient across the membrane. The polypeptide is ATP synthase epsilon chain (Solibacter usitatus (strain Ellin6076)).